Reading from the N-terminus, the 130-residue chain is Albumin-1 A (130 aa).

A signal peptide spans Met-1–Ala-26. Cystine bridges form between Cys-29/Cys-46, Cys-33/Cys-48, and Cys-41/Cys-58. 2 propeptides span residues Val-64–Asn-69 and Leu-123–Ala-130.

The C-terminal glycine may be removed from PA1b. As to expression, major component of both the cotyledons and embryonic axes of mature seeds.

Functionally, PA1b binds to basic 7S globulin (BG) and stimulates its phosphorylation activity. Involved in the signal transduction system to regulate the growth and differentiation as a hormone peptide. Toxic to various insects through binding to a high affinity binding site in the insect gut. The chain is Albumin-1 A from Pisum sativum (Garden pea).